We begin with the raw amino-acid sequence, 972 residues long: 116 kDa U5 small nuclear ribonucleoprotein component (972 aa).

Met1 bears the N-acetylmethionine mark. The segment at 1–54 is disordered; it reads MDTDLYDEFGNYIGPELDSDEDDDELGRETKDLDEMDDDDDDDDVGDHDDDHPG. 2 stretches are compositionally biased toward acidic residues: residues 17 to 26 and 34 to 48; these read LDSDEDDDEL and DEMDDDDDDDDVGDH. Ser19 is subject to Phosphoserine. Lys64 participates in a covalent cross-link: Glycyl lysine isopeptide (Lys-Gly) (interchain with G-Cter in SUMO1); alternate. Residue Lys64 forms a Glycyl lysine isopeptide (Lys-Gly) (interchain with G-Cter in SUMO2); alternate linkage. A Phosphothreonine modification is found at Thr86. Residues 127–409 form the tr-type G domain; the sequence is ELIRNVTLCG…GIHLTKEELK (283 aa). Residues 136-143, 204-208, and 258-261 each bind GTP; these read GHLHHGKT, DTPGH, and NKID.

Belongs to the TRAFAC class translation factor GTPase superfamily. Classic translation factor GTPase family. EF-G/EF-2 subfamily. In terms of assembly, component of the U5 snRNP and the U4/U6-U5 tri-snRNP complex, a building block of the spliceosome. The U4/U6-U5 tri-snRNP complex is composed of the U4, U6 and U5 snRNAs and at least PRPF3, PRPF4, PRPF6, PRPF8, PRPF31, SNRNP200, TXNL4A, SNRNP40, DDX23, CD2BP2, PPIH, SNU13, EFTUD2, SART1 and USP39. Component of the pre-catalytic, catalytic and post-catalytic spliceosome complexes. Component of the minor spliceosome, which splices U12-type introns. Within this complex, interacts with CRIPT. Interacts with ERBB4 and PRPF8. Interacts with PIH1D1. Interacts with RPAP3 and URI1 in a ZNHIT2-dependent manner. Interacts with NRDE2. Interacts with FAM50A. Interacts with UBL5.

Its subcellular location is the nucleus. Required for pre-mRNA splicing as component of the spliceosome, including pre-catalytic, catalytic and post-catalytic spliceosomal complexes. Component of the U5 snRNP and the U4/U6-U5 tri-snRNP complex, a building block of the spliceosome. As a component of the minor spliceosome, involved in the splicing of U12-type introns in pre-mRNAs. The protein is 116 kDa U5 small nuclear ribonucleoprotein component (EFTUD2) of Homo sapiens (Human).